Reading from the N-terminus, the 324-residue chain is Ribosomal RNA small subunit methyltransferase H (324 aa).

S-adenosyl-L-methionine contacts are provided by residues 35–37 (GGH), aspartate 55, phenylalanine 85, aspartate 103, and glutamine 110.

The protein belongs to the methyltransferase superfamily. RsmH family.

Its subcellular location is the cytoplasm. The catalysed reaction is cytidine(1402) in 16S rRNA + S-adenosyl-L-methionine = N(4)-methylcytidine(1402) in 16S rRNA + S-adenosyl-L-homocysteine + H(+). In terms of biological role, specifically methylates the N4 position of cytidine in position 1402 (C1402) of 16S rRNA. The sequence is that of Ribosomal RNA small subunit methyltransferase H from Solidesulfovibrio magneticus (strain ATCC 700980 / DSM 13731 / RS-1) (Desulfovibrio magneticus).